Consider the following 394-residue polypeptide: Probable glycosyltransferase FCK3 (394 aa).

It belongs to the afumC glycosyltransferase family.

The protein operates within secondary metabolite biosynthesis. Probable glycosyl transferase; part of the gene cluster that mediates the biosynthesis of cytokinins such as fusatin, fusatinic acids or 8-oxofusatin, known for their growth promoting and anti-senescence activities toward host plants. FCK1 is a bifunctional enzyme that performs the first steps in the biosynthesis of Fusarium cytokinins. It first condenses adenosine monophosphate (AMP) with dimethylallyl diphosphate (DMAPP) to yield isoprenyl adenosine monophosphate. It then catalyzes the removal of the phosphoribose to produce isopentenylaldehyde. The cytochrome P450 monooxygenase then converts isopentenylaldehyde to trans-zeatin. A condensation step converts trans-zeatin to fusatin which is further modified to produce fusatinic acid. The mechanism for oxidation of fusatin to fusatinic acid remains unknown. 8-oxofusatin could be produced through several pathways, via direct oxygenation of fusatin, or via the 8-oxo-pentenyladenine intermediate which itself must arise from either the prenylation of 8-oxo-AMP by FCK1 and/or oxygenation of isopentenylaldehyde. Both the FCK3 and FCK4 enzymes act downstream of the identified cytokinins to produce yet unidentified compounds. The polypeptide is Probable glycosyltransferase FCK3 (Fusarium pseudograminearum (strain CS3096) (Wheat and barley crown-rot fungus)).